We begin with the raw amino-acid sequence, 113 residues long: UPF0482 protein YnfB (113 aa).

Residues 1–28 (MKITLSKRIGLLAILLPCALALSTTVHA) form the signal peptide.

The protein belongs to the UPF0482 family.

The sequence is that of UPF0482 protein YnfB from Escherichia coli O8 (strain IAI1).